Reading from the N-terminus, the 404-residue chain is GID complex subunit 9 (404 aa).

The 33-residue stretch at 116–148 (SRVRLNRLVADYMMANGYHGAAALLCKDSQLEN) folds into the LisH domain. The 58-residue stretch at 154-211 (IYKRYQLIHDSILQQELKEVLSWCSEHRAILKKNNSTLELEVRLQRFIELIKSKKLCQ) folds into the CTLH domain. The segment at 317–389 (CPVCTPCLND…REGFLRDPYS (73 aa)) adopts an RING-Gid-type zinc-finger fold.

The protein belongs to the FYV10 family. As to quaternary structure, identified in the GID/CTLH complex. In the absence of stress, the complex exists as an inactive anticipatory complex (GID(Ant)), composed of Gid1, the E3 ubiquitin-ligase Gid2, Gid5, Gid8, and the RING-like subunit Gid9, awaiting a substrate receptor to form the active E3 ligase complex. When cells are shifted to glucose-containing medium, the substrate receptor Gid4 is induced and becomes part of the complex, named GID(SR4). Additionally, Gid7 transforms the GID(SR4) E3 ligase core into a higher-order supramolecular assembly (Chelator-GID(SR4)). Under osmotic or heat stress, the substrate receptor Gid10 is induced and becomes part of the complex, named GID(SR10).

The protein resides in the cytoplasm. It localises to the nucleus. It carries out the reaction S-ubiquitinyl-[E2 ubiquitin-conjugating enzyme]-L-cysteine + [acceptor protein]-L-lysine = [E2 ubiquitin-conjugating enzyme]-L-cysteine + N(6)-ubiquitinyl-[acceptor protein]-L-lysine.. The protein operates within protein modification; protein ubiquitination. Its function is as follows. Component of the GID E3 ligase complex recruiting N termini and catalyzing ubiquitination of proteins targeted for degradation. GID E3 is regulated through assembly with interchangeable N-degron-binding substrate receptors induced by distinct environmental perturbations. Required for the adaptation to the presence of glucose in the growth medium; mediates in association with the substrate receptor VID24/GID4 the degradation of enzymes involved in gluconeogenesis when cells are shifted to glucose-containing medium. In Schizosaccharomyces pombe (strain 972 / ATCC 24843) (Fission yeast), this protein is GID complex subunit 9 (gid9).